Reading from the N-terminus, the 160-residue chain is SsrA-binding protein (160 aa).

Positions 131-160 are disordered; the sequence is KKEYDKRHTERERDSDRELQRAVRSKGKDD.

This sequence belongs to the SmpB family.

It is found in the cytoplasm. Required for rescue of stalled ribosomes mediated by trans-translation. Binds to transfer-messenger RNA (tmRNA), required for stable association of tmRNA with ribosomes. tmRNA and SmpB together mimic tRNA shape, replacing the anticodon stem-loop with SmpB. tmRNA is encoded by the ssrA gene; the 2 termini fold to resemble tRNA(Ala) and it encodes a 'tag peptide', a short internal open reading frame. During trans-translation Ala-aminoacylated tmRNA acts like a tRNA, entering the A-site of stalled ribosomes, displacing the stalled mRNA. The ribosome then switches to translate the ORF on the tmRNA; the nascent peptide is terminated with the 'tag peptide' encoded by the tmRNA and targeted for degradation. The ribosome is freed to recommence translation, which seems to be the essential function of trans-translation. The protein is SsrA-binding protein of Pseudomonas syringae pv. syringae (strain B728a).